Reading from the N-terminus, the 58-residue chain is Keratin-associated protein 19-6 (58 aa).

Belongs to the KRTAP type 19 family. Interacts with hair keratins.

Its function is as follows. In the hair cortex, hair keratin intermediate filaments are embedded in an interfilamentous matrix, consisting of hair keratin-associated proteins (KRTAP), which are essential for the formation of a rigid and resistant hair shaft through their extensive disulfide bond cross-linking with abundant cysteine residues of hair keratins. The matrix proteins include the high-sulfur and high-glycine-tyrosine keratins. This chain is Keratin-associated protein 19-6 (KRTAP19-6), found in Homo sapiens (Human).